We begin with the raw amino-acid sequence, 739 residues long: Interleukin-17 receptor D (739 aa).

An N-terminal signal peptide occupies residues 1–16 (MAPWLQLCSVFFTVNA). The Extracellular segment spans residues 17 to 299 (CLNGSQLAVA…VHSPWAGPIR (283 aa)). N-linked (GlcNAc...) asparagine glycosylation is found at Asn19, Asn55, Asn62, Asn80, Asn137, Asn171, Asn206, and Asn277. The helical transmembrane segment at 300 to 320 (AVAITVPLVVISAFATLFTVM) threads the bilayer. At 321–739 (CRKKQQENIY…TDELHAVAPL (419 aa)) the chain is on the cytoplasmic side. Residues 355–509 (RPKVFLCYSS…LMDNLPQLCS (155 aa)) form the SEFIR domain. Disordered stretches follow at residues 614–635 (GPAD…EARP) and 650–719 (VKAG…SSGS). Residues 667–702 (SSVPSSELSLPLMEGLSTDQTETSSLTESVSSSSGL) are compositionally biased toward low complexity.

In terms of assembly, interacts with MAP3K7. Self-associates. Interacts with FGFR1, FGFR2 and phosphorylated MAP2K1 or MAP2K2. Associates with a MAP2K1/2-MAPK1/3 complex. In terms of tissue distribution, expressed in umbilical vein endothelial cells and in several highly vascularized tissues such as kidney, colon, skeletal muscle, heart and small intestine. Highly expressed in ductal epithelial cells of salivary glands, seminal vesicles and the collecting tubules of the kidney. Isoform 1 is also highly expressed in both fetal and adult brain, pituitary, tonsils, spleen, adenoids, fetal kidney, liver, testes and ovary. Isoform 1 is also expressed at moderate levels in primary aortic endothelial cells and adrenal medulla, and at low levels in adrenal cortex. Isoform 4 is specifically and highly expressed in pituitary, fetal brain and umbilical vein endothelial cells.

It is found in the golgi apparatus membrane. It localises to the cell membrane. The protein resides in the cytoplasm. Feedback inhibitor of fibroblast growth factor mediated Ras-MAPK signaling and ERK activation. Regulates the nuclear ERK signaling pathway by spatially blocking nuclear translocation of activated ERK without inhibiting cytoplasmic phosphorylation of ERK. Mediates JNK activation and may be involved in apoptosis. May inhibit FGF-induced FGFR1 tyrosine phosphorylation. Might have a role in the early stages of fate specification of GnRH-secreting neurons. Inhibits TGFB-induced epithelial-to-mesenchymal transition in lens epithelial cells. The polypeptide is Interleukin-17 receptor D (IL17RD) (Homo sapiens (Human)).